The chain runs to 123 residues: Histone H2B (123 aa).

The segment at M1–R32 is disordered. The span at G9–A18 shows a compositional bias: basic residues. Residue S110 is glycosylated (O-linked (GlcNAc) serine). K118 is covalently cross-linked (Glycyl lysine isopeptide (Lys-Gly) (interchain with G-Cter in ubiquitin)).

The protein belongs to the histone H2B family. As to quaternary structure, the nucleosome is a histone octamer containing two molecules each of H2A, H2B, H3 and H4 assembled in one H3-H4 heterotetramer and two H2A-H2B heterodimers. The octamer wraps approximately 147 bp of DNA. Monoubiquitination of Lys-118 gives a specific tag for epigenetic transcriptional activation and is also prerequisite for histone H3 'Lys-4' and 'Lys-79' methylation. Post-translationally, glcNAcylation at Ser-110 promotes monoubiquitination of Lys-118. It fluctuates in response to extracellular glucose, and associates with transcribed genes.

It localises to the nucleus. The protein localises to the chromosome. In terms of biological role, core component of nucleosome. Nucleosomes wrap and compact DNA into chromatin, limiting DNA accessibility to the cellular machineries which require DNA as a template. Histones thereby play a central role in transcription regulation, DNA repair, DNA replication and chromosomal stability. DNA accessibility is regulated via a complex set of post-translational modifications of histones, also called histone code, and nucleosome remodeling. This Holothuria tubulosa (Tubular sea cucumber) protein is Histone H2B.